Consider the following 392-residue polypeptide: Phosphoglycerate kinase (392 aa).

Residues 21 to 23 (DMN), arginine 36, 59 to 62 (HLGR), arginine 114, and arginine 147 each bind substrate. ATP-binding positions include lysine 198, glutamate 320, and 346-349 (GGDT).

This sequence belongs to the phosphoglycerate kinase family. In terms of assembly, monomer.

The protein resides in the cytoplasm. It carries out the reaction (2R)-3-phosphoglycerate + ATP = (2R)-3-phospho-glyceroyl phosphate + ADP. It participates in carbohydrate degradation; glycolysis; pyruvate from D-glyceraldehyde 3-phosphate: step 2/5. This Neisseria meningitidis serogroup C (strain 053442) protein is Phosphoglycerate kinase.